Reading from the N-terminus, the 175-residue chain is SsrA-binding protein (175 aa).

2 disordered regions span residues 1–29 (MTRNPQPDRSKTAPKNAKRDPVASGERDA) and 152–175 (KRETDRRKTADRDAREAIARSRKS).

Belongs to the SmpB family.

Its subcellular location is the cytoplasm. Its function is as follows. Required for rescue of stalled ribosomes mediated by trans-translation. Binds to transfer-messenger RNA (tmRNA), required for stable association of tmRNA with ribosomes. tmRNA and SmpB together mimic tRNA shape, replacing the anticodon stem-loop with SmpB. tmRNA is encoded by the ssrA gene; the 2 termini fold to resemble tRNA(Ala) and it encodes a 'tag peptide', a short internal open reading frame. During trans-translation Ala-aminoacylated tmRNA acts like a tRNA, entering the A-site of stalled ribosomes, displacing the stalled mRNA. The ribosome then switches to translate the ORF on the tmRNA; the nascent peptide is terminated with the 'tag peptide' encoded by the tmRNA and targeted for degradation. The ribosome is freed to recommence translation, which seems to be the essential function of trans-translation. The polypeptide is SsrA-binding protein (Koribacter versatilis (strain Ellin345)).